A 423-amino-acid polypeptide reads, in one-letter code: Serine hydroxymethyltransferase (423 aa).

(6S)-5,6,7,8-tetrahydrofolate contacts are provided by residues L120 and 124 to 126 (GHL). Position 229 is an N6-(pyridoxal phosphate)lysine (K229). 353–355 (SPF) is a (6S)-5,6,7,8-tetrahydrofolate binding site.

The protein belongs to the SHMT family. In terms of assembly, homodimer. It depends on pyridoxal 5'-phosphate as a cofactor.

It localises to the cytoplasm. It carries out the reaction (6R)-5,10-methylene-5,6,7,8-tetrahydrofolate + glycine + H2O = (6S)-5,6,7,8-tetrahydrofolate + L-serine. Its pathway is one-carbon metabolism; tetrahydrofolate interconversion. It functions in the pathway amino-acid biosynthesis; glycine biosynthesis; glycine from L-serine: step 1/1. Functionally, catalyzes the reversible interconversion of serine and glycine with tetrahydrofolate (THF) serving as the one-carbon carrier. This reaction serves as the major source of one-carbon groups required for the biosynthesis of purines, thymidylate, methionine, and other important biomolecules. Also exhibits THF-independent aldolase activity toward beta-hydroxyamino acids, producing glycine and aldehydes, via a retro-aldol mechanism. This Prochlorococcus marinus (strain MIT 9515) protein is Serine hydroxymethyltransferase.